We begin with the raw amino-acid sequence, 34 residues long: Photosystem II reaction center protein M (34 aa).

Residues 5–25 traverse the membrane as a helical segment; the sequence is ILAFIATALFILVPTAFLLII.

Belongs to the PsbM family. PSII is composed of 1 copy each of membrane proteins PsbA, PsbB, PsbC, PsbD, PsbE, PsbF, PsbH, PsbI, PsbJ, PsbK, PsbL, PsbM, PsbT, PsbX, PsbY, PsbZ, Psb30/Ycf12, at least 3 peripheral proteins of the oxygen-evolving complex and a large number of cofactors. It forms dimeric complexes.

It is found in the plastid. Its subcellular location is the chloroplast thylakoid membrane. Functionally, one of the components of the core complex of photosystem II (PSII). PSII is a light-driven water:plastoquinone oxidoreductase that uses light energy to abstract electrons from H(2)O, generating O(2) and a proton gradient subsequently used for ATP formation. It consists of a core antenna complex that captures photons, and an electron transfer chain that converts photonic excitation into a charge separation. This subunit is found at the monomer-monomer interface. This is Photosystem II reaction center protein M from Coffea arabica (Arabian coffee).